A 350-amino-acid chain; its full sequence is Quinone oxidoreductase-like protein 2 (350 aa).

Residue lysine 36 is modified to N6-acetyllysine. The residue at position 201 (lysine 201) is an N6-succinyllysine. An N6-acetyllysine mark is found at lysine 302 and lysine 328.

This sequence belongs to the zinc-containing alcohol dehydrogenase family. Quinone oxidoreductase subfamily.

The protein is Quinone oxidoreductase-like protein 2 of Rattus norvegicus (Rat).